We begin with the raw amino-acid sequence, 174 residues long: Cuticle protein 1 (174 aa).

An N-terminal signal peptide occupies residues 1–18; that stretch reads MRFLIAFVAILGYASASA.

It is found in the secreted. The sequence is that of Cuticle protein 1 from Lonomia obliqua (Moth).